Consider the following 464-residue polypeptide: Siroheme synthase (464 aa).

A precorrin-2 dehydrogenase /sirohydrochlorin ferrochelatase region spans residues 1–203 (MEFLPLFHNL…GQGDEAERLL (203 aa)). NAD(+)-binding positions include 22-23 (EI) and 43-44 (PQ). At S128 the chain carries Phosphoserine. The uroporphyrinogen-III C-methyltransferase stretch occupies residues 216–464 (GEVYLVGAGP…KWFEGAQSQV (249 aa)). Residue P225 coordinates S-adenosyl-L-methionine. The active-site Proton acceptor is the D248. K270 (proton donor) is an active-site residue. S-adenosyl-L-methionine is bound by residues 301 to 303 (GGD), I306, 331 to 332 (TA), M383, and G412.

The protein in the N-terminal section; belongs to the precorrin-2 dehydrogenase / sirohydrochlorin ferrochelatase family. In the C-terminal section; belongs to the precorrin methyltransferase family.

The enzyme catalyses uroporphyrinogen III + 2 S-adenosyl-L-methionine = precorrin-2 + 2 S-adenosyl-L-homocysteine + H(+). The catalysed reaction is precorrin-2 + NAD(+) = sirohydrochlorin + NADH + 2 H(+). It carries out the reaction siroheme + 2 H(+) = sirohydrochlorin + Fe(2+). Its pathway is cofactor biosynthesis; adenosylcobalamin biosynthesis; precorrin-2 from uroporphyrinogen III: step 1/1. The protein operates within cofactor biosynthesis; adenosylcobalamin biosynthesis; sirohydrochlorin from precorrin-2: step 1/1. It participates in porphyrin-containing compound metabolism; siroheme biosynthesis; precorrin-2 from uroporphyrinogen III: step 1/1. It functions in the pathway porphyrin-containing compound metabolism; siroheme biosynthesis; siroheme from sirohydrochlorin: step 1/1. Its pathway is porphyrin-containing compound metabolism; siroheme biosynthesis; sirohydrochlorin from precorrin-2: step 1/1. Functionally, multifunctional enzyme that catalyzes the SAM-dependent methylations of uroporphyrinogen III at position C-2 and C-7 to form precorrin-2 via precorrin-1. Then it catalyzes the NAD-dependent ring dehydrogenation of precorrin-2 to yield sirohydrochlorin. Finally, it catalyzes the ferrochelation of sirohydrochlorin to yield siroheme. This Pseudomonas fluorescens (strain SBW25) protein is Siroheme synthase.